Consider the following 372-residue polypeptide: Aminomethyltransferase (372 aa).

The protein belongs to the GcvT family. As to quaternary structure, the glycine cleavage system is composed of four proteins: P, T, L and H.

The catalysed reaction is N(6)-[(R)-S(8)-aminomethyldihydrolipoyl]-L-lysyl-[protein] + (6S)-5,6,7,8-tetrahydrofolate = N(6)-[(R)-dihydrolipoyl]-L-lysyl-[protein] + (6R)-5,10-methylene-5,6,7,8-tetrahydrofolate + NH4(+). Functionally, the glycine cleavage system catalyzes the degradation of glycine. The sequence is that of Aminomethyltransferase from Streptomyces coelicolor (strain ATCC BAA-471 / A3(2) / M145).